The following is a 285-amino-acid chain: Sulfotransferase 2A2 (285 aa).

Lysine 44, serine 45, glycine 46, threonine 47, asparagine 48, and tryptophan 49 together coordinate 3'-phosphoadenylyl sulfate. Histidine 99 serves as the catalytic Proton acceptor. 7 residues coordinate 3'-phosphoadenylyl sulfate: arginine 121, serine 129, tyrosine 184, serine 218, arginine 247, lysine 248, and glycine 249.

It belongs to the sulfotransferase 1 family. Detected in liver.

It localises to the cytoplasm. It catalyses the reaction an alcohol + 3'-phosphoadenylyl sulfate = an alkyl sulfate + adenosine 3',5'-bisphosphate + H(+). Functionally, sulfotransferase that utilizes 3'-phospho-5'-adenylyl sulfate (PAPS) as sulfonate donor to catalyze the sulfate conjugation of a potential wide variety of acceptor molecules bearing a hydroxyl group. Sulfonation increases the water solubility of most compounds, and therefore their renal excretion, but it can also result in bioactivation to form active metabolites. The sequence is that of Sulfotransferase 2A2 from Rattus norvegicus (Rat).